We begin with the raw amino-acid sequence, 367 residues long: Alanine racemase (367 aa).

The active-site Proton acceptor; specific for D-alanine is the K40. Residue K40 is modified to N6-(pyridoxal phosphate)lysine. R136 contacts substrate. Y263 acts as the Proton acceptor; specific for L-alanine in catalysis. M310 serves as a coordination point for substrate.

Belongs to the alanine racemase family. Pyridoxal 5'-phosphate serves as cofactor.

The catalysed reaction is L-alanine = D-alanine. It participates in amino-acid biosynthesis; D-alanine biosynthesis; D-alanine from L-alanine: step 1/1. Functionally, catalyzes the interconversion of L-alanine and D-alanine. May also act on other amino acids. The sequence is that of Alanine racemase (alr) from Lactococcus lactis subsp. cremoris (strain MG1363).